The following is a 159-amino-acid chain: MSQFTHINASGEANMVDVSAKAETVREARAEAFVHMAPETLQLIVSGQHHKGDVFATARIAGIQAAKKTWDLIPLCHPLLLSKVEVQLEAIEAENKVRIESVCKLAGKTGVEMEALTAASVAALTIYDMCKAVQKDMVIGPVRLLEKTGGKSGHFKVEA.

Residues 75-77 and 113-114 contribute to the substrate site; these read LCH and ME. Aspartate 128 is an active-site residue.

This sequence belongs to the MoaC family. In terms of assembly, homohexamer; trimer of dimers.

The enzyme catalyses (8S)-3',8-cyclo-7,8-dihydroguanosine 5'-triphosphate = cyclic pyranopterin phosphate + diphosphate. It participates in cofactor biosynthesis; molybdopterin biosynthesis. In terms of biological role, catalyzes the conversion of (8S)-3',8-cyclo-7,8-dihydroguanosine 5'-triphosphate to cyclic pyranopterin monophosphate (cPMP). The sequence is that of Cyclic pyranopterin monophosphate synthase from Vibrio vulnificus (strain YJ016).